We begin with the raw amino-acid sequence, 338 residues long: Phosphatidylinositol:ceramide inositolphosphotransferase (338 aa).

The Cytoplasmic portion of the chain corresponds to 1–36 (MTSHVTAHDVGGNEDIGTDHVPWYKQPLPLCTQVMR). Residues 37-57 (FILLLLLTVMFLGVAILVANA) traverse the membrane as a helical segment. Residues 58 to 87 (RMPDPEKVRPLPDLLLESIPKVALLENGTN) lie on the Extracellular side of the membrane. The helical transmembrane segment at 88–108 (VIIFLLNATTVVVGFKVFLLE) threads the bilayer. The Cytoplasmic segment spans residues 109-116 (RHMNGLPR). The helical transmembrane segment at 117-137 (VTFLVGVPKIGSFLNRMAFGV) threads the bilayer. The Extracellular portion of the chain corresponds to 138–152 (LDSGRRPFPLKNVFP). A helical transmembrane segment spans residues 153–173 (IMAIRFLTSYAVVMVFRAFVI). Topologically, residues 174-189 (MGTSYPATDNHCQNPQ) are cytoplasmic. Residues 190–210 (VIEHPVLNVILTLVTLGSGAI) traverse the membrane as a helical segment. At 211-222 (HCGDLMFSGHTM) the chain is on the extracellular side. Residue His220 is part of the active site. A helical transmembrane segment spans residues 223–243 (ILSLAFILAWDYSPFLHPWAV). Over 244–338 (RVWVSVLLPI…TDASAALPEH (95 aa)) the chain is Cytoplasmic. Catalysis depends on residues His264 and Asp268.

The protein belongs to the sphingomyelin synthase family.

The protein localises to the membrane. In terms of biological role, bidirectional lipid inositolphosphotransferase capable of converting phosphatidylinositol (PI) and ceramide to inositol-phosphorylceramide (IPC) and diacylglycerol (DAG) and vice versa. Direction is dependent on the relative concentrations of DAG and ceramide as phosphoinositol acceptors. Essential for viability of the pathogenic bloodstream stage of this human protozoan parasite and, consequently, can be considered as potential drug target. This Leishmania major protein is Phosphatidylinositol:ceramide inositolphosphotransferase.